A 512-amino-acid chain; its full sequence is Maturase K (512 aa).

The protein belongs to the intron maturase 2 family. MatK subfamily.

The protein localises to the plastid. It localises to the chloroplast. Usually encoded in the trnK tRNA gene intron. Probably assists in splicing its own and other chloroplast group II introns. The polypeptide is Maturase K (Lilium regale (Regal lily)).